We begin with the raw amino-acid sequence, 175 residues long: Bcl-2-related protein A1 (175 aa).

The short motif at 77–97 (KEFEDGIINWGRIVTIFAFEG) is the BH1 element. Positions 132-147 (EWIRQNGGWENGFVKK) match the BH2 motif.

Belongs to the Bcl-2 family. In terms of assembly, interacts directly with BAK1, BID, BMF and BBC3. Interacts directly with BCL2L11/BIM. Interacts with BAX isoform Sigma. Interacts directly with PMAIP1. Interacts with RTL10/BOP. Interacts with ING4. Interacts with UBQLN4. In terms of tissue distribution, seems to be restricted to the hematopoietic compartment. Expressed in peripheral blood, spleen, and bone marrow, at moderate levels in lung, small intestine and testis, at a minimal levels in other tissues. Also found in vascular smooth muscle cells and hematopoietic malignancies.

Its subcellular location is the cytoplasm. Its function is as follows. Retards apoptosis induced by IL-3 deprivation. May function in the response of hemopoietic cells to external signals and in maintaining endothelial survival during infection. Can inhibit apoptosis induced by serum starvation in the mammary epithelial cell line HC11. This Homo sapiens (Human) protein is Bcl-2-related protein A1 (BCL2A1).